The primary structure comprises 67 residues: uncharacterized protein (67 aa).

Transmembrane regions (helical) follow at residues 10-30 and 40-60; these read EFFI…IIMW and LMVG…WMVF.

It belongs to the plectrovirus ORF10 family.

It localises to the host membrane. This is an uncharacterized protein from Spiroplasma melliferum (SpV1).